A 243-amino-acid polypeptide reads, in one-letter code: 2-O-methyltransferase NoeI (243 aa).

It belongs to the FkbM methyltransferase family.

The protein resides in the cytoplasm. Its function is as follows. Required for 2-O-methylation of the fucosyl group of Nod factors. The polypeptide is 2-O-methyltransferase NoeI (noeI) (Sinorhizobium fredii (strain NBRC 101917 / NGR234)).